We begin with the raw amino-acid sequence, 511 residues long: Bifunctional purine biosynthesis protein PurH (511 aa).

The MGS-like domain occupies 1–145 (MKKRALVSVS…KNHKFVSVIV (145 aa)).

It belongs to the PurH family.

It carries out the reaction (6R)-10-formyltetrahydrofolate + 5-amino-1-(5-phospho-beta-D-ribosyl)imidazole-4-carboxamide = 5-formamido-1-(5-phospho-D-ribosyl)imidazole-4-carboxamide + (6S)-5,6,7,8-tetrahydrofolate. It catalyses the reaction IMP + H2O = 5-formamido-1-(5-phospho-D-ribosyl)imidazole-4-carboxamide. The protein operates within purine metabolism; IMP biosynthesis via de novo pathway; 5-formamido-1-(5-phospho-D-ribosyl)imidazole-4-carboxamide from 5-amino-1-(5-phospho-D-ribosyl)imidazole-4-carboxamide (10-formyl THF route): step 1/1. It functions in the pathway purine metabolism; IMP biosynthesis via de novo pathway; IMP from 5-formamido-1-(5-phospho-D-ribosyl)imidazole-4-carboxamide: step 1/1. In Bacillus thuringiensis (strain Al Hakam), this protein is Bifunctional purine biosynthesis protein PurH.